Here is a 155-residue protein sequence, read N- to C-terminus: Small ribosomal subunit protein uS7 (155 aa).

This sequence belongs to the universal ribosomal protein uS7 family. As to quaternary structure, part of the 30S ribosomal subunit. Contacts proteins S9 and S11.

In terms of biological role, one of the primary rRNA binding proteins, it binds directly to 16S rRNA where it nucleates assembly of the head domain of the 30S subunit. Is located at the subunit interface close to the decoding center, probably blocks exit of the E-site tRNA. This chain is Small ribosomal subunit protein uS7, found in Kosmotoga olearia (strain ATCC BAA-1733 / DSM 21960 / TBF 19.5.1).